The primary structure comprises 324 residues: NADH-ubiquinone oxidoreductase chain 1 (324 aa).

8 helical membrane-spanning segments follow: residues 9–29 (LINP…LTLI), 75–95 (FLFL…WAPM), 106–126 (LGIL…LGSG), 146–166 (ISYE…SGGY), 177–197 (SIWL…STLA), 228–248 (LFFL…AVLF), 259–279 (ELTT…FLWV), and 299–319 (FLPL…ALAG).

It belongs to the complex I subunit 1 family.

It localises to the mitochondrion inner membrane. It carries out the reaction a ubiquinone + NADH + 5 H(+)(in) = a ubiquinol + NAD(+) + 4 H(+)(out). In terms of biological role, core subunit of the mitochondrial membrane respiratory chain NADH dehydrogenase (Complex I) that is believed to belong to the minimal assembly required for catalysis. Complex I functions in the transfer of electrons from NADH to the respiratory chain. The immediate electron acceptor for the enzyme is believed to be ubiquinone. This is NADH-ubiquinone oxidoreductase chain 1 (MT-ND1) from Carassius auratus (Goldfish).